We begin with the raw amino-acid sequence, 100 residues long: Urease subunit gamma (100 aa).

Belongs to the urease gamma subunit family. In terms of assembly, heterotrimer of UreA (gamma), UreB (beta) and UreC (alpha) subunits. Three heterotrimers associate to form the active enzyme.

It localises to the cytoplasm. It carries out the reaction urea + 2 H2O + H(+) = hydrogencarbonate + 2 NH4(+). It functions in the pathway nitrogen metabolism; urea degradation; CO(2) and NH(3) from urea (urease route): step 1/1. This Prochlorococcus marinus (strain AS9601) protein is Urease subunit gamma.